The sequence spans 200 residues: Sec-independent protein translocase protein TatB (200 aa).

The helical transmembrane segment at 2–22 threads the bilayer; it reads LPDIGGTELLIIAAVALIVVG. The interval 160–200 is disordered; that stretch reads KAPRKRASQKQEITVEAPKAVRAPRKRASKAGDSTASDIVS. Residues 191–200 show a composition bias toward polar residues; it reads GDSTASDIVS.

It belongs to the TatB family. As to quaternary structure, the Tat system comprises two distinct complexes: a TatABC complex, containing multiple copies of TatA, TatB and TatC subunits, and a separate TatA complex, containing only TatA subunits. Substrates initially bind to the TatABC complex, which probably triggers association of the separate TatA complex to form the active translocon.

The protein resides in the cell inner membrane. Part of the twin-arginine translocation (Tat) system that transports large folded proteins containing a characteristic twin-arginine motif in their signal peptide across membranes. Together with TatC, TatB is part of a receptor directly interacting with Tat signal peptides. TatB may form an oligomeric binding site that transiently accommodates folded Tat precursor proteins before their translocation. The sequence is that of Sec-independent protein translocase protein TatB from Caulobacter vibrioides (strain ATCC 19089 / CIP 103742 / CB 15) (Caulobacter crescentus).